Consider the following 223-residue polypeptide: MKIQYLGHSAFYVEAGEMKALIDPFIPETLTHPIFSFADITHIFITHGHGDHLGSTLSIVRESNATVITNYEISLYLQSKGVNCHSMHIGGRTTMDFGTVKMTPALHGSAIETDEGLVCGGNPGGFVIECQGKKLYHAGDTGLTMDMKLLAVEEIDVALLPIGGNFTMDVQDAVRAVAFIGAKVAIPMHYNTFPVITASPESFKEQVKTSQVHILNVEEVYNF.

It belongs to the UPF0173 family.

The chain is UPF0173 metal-dependent hydrolase Amet_4625 from Alkaliphilus metalliredigens (strain QYMF).